The following is a 225-amino-acid chain: 2-C-methyl-D-erythritol 4-phosphate cytidylyltransferase (225 aa).

The protein belongs to the IspD/TarI cytidylyltransferase family. IspD subfamily.

The enzyme catalyses 2-C-methyl-D-erythritol 4-phosphate + CTP + H(+) = 4-CDP-2-C-methyl-D-erythritol + diphosphate. It functions in the pathway isoprenoid biosynthesis; isopentenyl diphosphate biosynthesis via DXP pathway; isopentenyl diphosphate from 1-deoxy-D-xylulose 5-phosphate: step 2/6. In terms of biological role, catalyzes the formation of 4-diphosphocytidyl-2-C-methyl-D-erythritol from CTP and 2-C-methyl-D-erythritol 4-phosphate (MEP). The polypeptide is 2-C-methyl-D-erythritol 4-phosphate cytidylyltransferase (Haemophilus influenzae (strain PittEE)).